A 249-amino-acid chain; its full sequence is Thrombin-like enzyme barnettobin (249 aa).

The N-terminal stretch at 1–10 (APKELQVSYA) is a signal peptide. Positions 11 to 16 (HKSSEL) are excised as a propeptide. In terms of domain architecture, Peptidase S1 spans 17 to 240 (VIGGDECDIN…YPPWIQSIIA (224 aa)). 6 cysteine pairs are disulfide-bonded: Cys-23-Cys-154, Cys-41-Cys-57, Cys-89-Cys-247, Cys-133-Cys-201, Cys-165-Cys-180, and Cys-191-Cys-216. Active-site charge relay system residues include His-56 and Asp-101. Asn-145 and Asn-161 each carry an N-linked (GlcNAc...) asparagine glycan. Ser-195 (charge relay system) is an active-site residue. N-linked (GlcNAc...) asparagine glycosylation occurs at Asn-242.

Belongs to the peptidase S1 family. Snake venom subfamily. Monomer. Post-translationally, glycoprotein, contains approx. 52% carbohydrate which could be removed by N-glycosidase. Glycosylation is important, since deglycosylated barnettobin loses its clotting and defibrinogenating effects. Expressed by the venom gland.

The protein localises to the secreted. Its activity is regulated as follows. Both coagulant and amidolytic activities are inhibited by PMSF. Amidolytic activity is partially inhibited by DTT, chymostatin, SBTI and TLCK, but not by heparin and EDTA. Thrombin-like snake venom serine protease that releases only fibrinopeptide A from human Aalpha chain of fibrinogen (specific coagulant activity was 251.7 NIH thrombin units/mg). Also shows fibrino(geno)lytic activities in vitro and defibrinogenating effects in vivo. The protein is Thrombin-like enzyme barnettobin of Bothrops barnetti (Barnett's lancehead).